Here is a 1556-residue protein sequence, read N- to C-terminus: Ferredoxin-dependent glutamate synthase 2 (1556 aa).

Residue Cys-37 is the For GATase activity of the active site. Residues 37-431 (CGVGFIANLR…PGQMIAVDLA (395 aa)) enclose the Glutamine amidotransferase type-2 domain. [3Fe-4S] cluster-binding residues include Cys-1173, Cys-1179, and Cys-1184. Residues 1533–1556 (PSEKDSPEANGDVSLTGEKTLTSV) form a disordered region.

It belongs to the glutamate synthase family. The cofactor is [3Fe-4S] cluster. FAD serves as cofactor. FMN is required as a cofactor.

The enzyme catalyses 2 oxidized [2Fe-2S]-[ferredoxin] + 2 L-glutamate = L-glutamine + 2 reduced [2Fe-2S]-[ferredoxin] + 2-oxoglutarate + 2 H(+). The protein operates within amino-acid biosynthesis; L-glutamate biosynthesis via GLT pathway; L-glutamate from 2-oxoglutarate and L-glutamine (ferredoxin route): step 1/1. Its pathway is energy metabolism; nitrogen metabolism. This is Ferredoxin-dependent glutamate synthase 2 (gltS) from Synechocystis sp. (strain ATCC 27184 / PCC 6803 / Kazusa).